We begin with the raw amino-acid sequence, 179 residues long: ATP synthase subunit delta (179 aa).

This sequence belongs to the ATPase delta chain family. F-type ATPases have 2 components, F(1) - the catalytic core - and F(0) - the membrane proton channel. F(1) has five subunits: alpha(3), beta(3), gamma(1), delta(1), epsilon(1). F(0) has three main subunits: a(1), b(2) and c(10-14). The alpha and beta chains form an alternating ring which encloses part of the gamma chain. F(1) is attached to F(0) by a central stalk formed by the gamma and epsilon chains, while a peripheral stalk is formed by the delta and b chains.

It is found in the cell membrane. F(1)F(0) ATP synthase produces ATP from ADP in the presence of a proton or sodium gradient. F-type ATPases consist of two structural domains, F(1) containing the extramembraneous catalytic core and F(0) containing the membrane proton channel, linked together by a central stalk and a peripheral stalk. During catalysis, ATP synthesis in the catalytic domain of F(1) is coupled via a rotary mechanism of the central stalk subunits to proton translocation. In terms of biological role, this protein is part of the stalk that links CF(0) to CF(1). It either transmits conformational changes from CF(0) to CF(1) or is implicated in proton conduction. This is ATP synthase subunit delta from Staphylococcus aureus (strain USA300 / TCH1516).